The following is a 261-amino-acid chain: Indole-3-glycerol phosphate synthase (261 aa).

The protein belongs to the TrpC family.

The catalysed reaction is 1-(2-carboxyphenylamino)-1-deoxy-D-ribulose 5-phosphate + H(+) = (1S,2R)-1-C-(indol-3-yl)glycerol 3-phosphate + CO2 + H2O. It functions in the pathway amino-acid biosynthesis; L-tryptophan biosynthesis; L-tryptophan from chorismate: step 4/5. In Paraburkholderia xenovorans (strain LB400), this protein is Indole-3-glycerol phosphate synthase.